The chain runs to 693 residues: Lamina-associated polypeptide 2, isoforms alpha/zeta (693 aa).

One can recognise an LEM-like domain in the interval 5–48 (LEDPSVLTKDKLKSELVANNVTLPAGEQRKDVYVQLYLQHLTAR). 3 disordered regions span residues 48–113 (RNRP…DVTE), 148–211 (LREQ…LAST), and 227–270 (TRPP…KLAP). A linker region spans residues 49–107 (NRPPLAAGANSKGPPDFSSDEEREPTPVLGSGASVGRGRGAVGRKATKKTDKPRLEDKD). Phosphoserine is present on residues Ser-59, Ser-66, and Ser-67. Thr-74 is subject to Phosphothreonine. A phosphoserine mark is found at Ser-79 and Ser-82. Arg-85 and Arg-87 each carry omega-N-methylarginine. Residues 96 to 105 (KKTDKPRLED) are compositionally biased toward basic and acidic residues. The 45-residue stretch at 108–152 (DLDVTELSNEELLDQLVRYGVNPGPIVGTTRKLYEKKLLKLREQG) folds into the LEM domain. Thr-153 carries the post-translational modification Phosphothreonine. Residues 154 to 177 (ESRSSTPLPTVSSSAENTRQNGSN) show a composition bias toward polar residues. Phosphoserine is present on residues Ser-155 and Ser-158. Phosphothreonine occurs at positions 159 and 163. Ser-165 and Ser-167 each carry phosphoserine. The segment covering 178 to 190 (DSDRYSDNDEGKK) has biased composition (basic and acidic residues). The Nuclear localization signal signature appears at 190 to 196 (KKEHKKV). Ser-206 carries the post-translational modification N6-acetyllysine. The segment covering 245–254 (TKRDPPRETC) has biased composition (basic and acidic residues). Ser-310 bears the Phosphoserine mark. Position 329 is an omega-N-methylarginine (Arg-329). The tract at residues 332 to 351 (KSRAQPLRAEEPGVSDQSVF) is disordered. 5 positions are modified to phosphoserine: Ser-349, Ser-352, Ser-368, Ser-420, and Ser-422. Residues 412–422 (QSSYQDSESLS) show a composition bias toward low complexity. Residues 412-442 (QSSYQDSESLSPPRKVPRLSEKPARGGDSGS) form a disordered region. Residues 557-656 (TESCDKHLDL…MGRRYLWLKD (100 aa)) are a coiled coil. Lys-655 carries the N6-acetyllysine modification.

Belongs to the LEM family. Homooligomer. Interacts with LMNA, BANF1 and RB1 and with chromosomes. Associates directly or indirectly with lamins at specific cell-cycle stages. Interacts with CMTM6. Post-translationally, phosphorylated in a mitose-specific manner.

The protein resides in the nucleus. The protein localises to the chromosome. May be involved in the structural organization of the nucleus and in the post-mitotic nuclear assembly. Plays an important role, together with LMNA, in the nuclear anchorage of RB1. In Mus musculus (Mouse), this protein is Lamina-associated polypeptide 2, isoforms alpha/zeta (Tmpo).